Here is a 530-residue protein sequence, read N- to C-terminus: Sulfate adenylyltransferase (530 aa).

The N-terminal stretch occupies residues 1–178 (MPIPAPHGGK…IQGLDYPTHY (178 aa)). The segment at 179–410 (DYIPFRKTPT…LRESNPPRSK (232 aa)) is catalytic. Q208 is a sulfate binding site. Residues 208 to 211 (QTRN) and 304 to 307 (GRDH) contribute to the ATP site. Residues T209, R210, and N211 contribute to the active site. Residue R210 participates in sulfate binding. A308 is a binding site for sulfate. V348 serves as a coordination point for ATP. The interval 411–530 (QGFAIVIDSS…LVSQGFYQQS (120 aa)) is required for oligomerization; adenylyl-sulfate kinase-like.

Belongs to the sulfate adenylyltransferase family. As to quaternary structure, homohexamer. Dimer of trimers.

The protein localises to the cytoplasm. It catalyses the reaction sulfate + ATP + H(+) = adenosine 5'-phosphosulfate + diphosphate. The protein operates within sulfur metabolism; hydrogen sulfide biosynthesis; sulfite from sulfate: step 1/3. Functionally, catalyzes the first intracellular reaction of sulfate assimilation, forming adenosine-5'-phosphosulfate (APS) from inorganic sulfate and ATP. Plays an important role in sulfate activation as a component of the biosynthesis pathway of sulfur-containing amino acids. This is Sulfate adenylyltransferase from Debaryomyces hansenii (strain ATCC 36239 / CBS 767 / BCRC 21394 / JCM 1990 / NBRC 0083 / IGC 2968) (Yeast).